The sequence spans 52 residues: Eukaryotic translation initiation factor 2 subunit 1 (52 aa).

The region spanning 16–52 is the S1 motif domain; that stretch reads EDVVMVNVRSIAEMGAYVSLLEYNNIEGRILLSELSR. S48 carries the post-translational modification Phosphoserine; by HRI. Residue S51 is modified to Phosphoserine.

Belongs to the eIF-2-alpha family. In terms of assembly, eukaryotic translation initiation factor 2 eIF2 is a heterotrimeric complex composed of an alpha (EIF2S1), a beta (EIF2S2) and a gamma (EIF2S3) chain. eIF2 is member of the 43S pre-initiation complex (43S PIC). eIF2 forms a complex with at least CELF1/CUGBP1, CALR, CALR3, EIF2S1, EIF2S2, HSP90B1 and HSPA5. Interaction with METAP2 protects EIF2S1 from inhibitory phosphorylation. Interacts with ABCF1. Associates with ribosomes. Interacts with DDX3X in an RNA-independent manner. Phosphorylation at Ser-48 and Ser-51 stabilizes the eIF-2/GDP/eIF2B complex and prevents GDP/GTP exchange reaction, thus impairing the recycling of eIF-2 between successive rounds of initiation and leading to global inhibition of translation, while concomitantly initiating the preferential translation of integrated stress response (ISR)-specific mRNAs. Substrate for at least 4 kinases: EIF2AK1/HRI, EIF2AK2/PKR, EIF2AK3/PERK and EIF2AK4/GCN2. Phosphorylation on Ser-51 by the EIF2AK4/GCN2 protein kinase occurs in response to amino acid starvation and UV irradiation. Phosphorylation at Ser-51 by the EIF2AK3/PERK protein kinase occurs in response to the unfolded protein response. Phosphorylation at Ser-51 by EIF2AK1/HRI in response to mitochondrial damage promotes relocalization to the mitochondrial surface.

It localises to the cytoplasm. The protein localises to the stress granule. The protein resides in the cytosol. It is found in the mitochondrion. Its activity is regulated as follows. Activity is regulated by phosphorylation at Ser-49 and Ser-52, which stabilizes the eIF2/GDP/eIF2B complex and prevents the eIF2B-mediated exchange of GDP for GTP, thereby preventing the formation of the 43S pre-initiation complex (43S PIC). This results in the global attenuation of 5' cap-dependent protein synthesis and concomitant translation of ISR-specific mRNAs that contain a short upstream open reading frame (uORF) in their 5' UTR, such as ATF4, ATF5, DDIT3/CHOP and PPP1R15A/GADD34. Functionally, member of the eIF2 complex that functions in the early steps of protein synthesis by forming a ternary complex with GTP and initiator tRNA. This complex binds to a 40S ribosomal subunit, followed by mRNA binding to form a 43S pre-initiation complex. Junction of the 60S ribosomal subunit to form the 80S initiation complex is preceded by hydrolysis of the GTP bound to eIF2 and release of an eIF2-GDP binary complex. In order for eIF2 to recycle and catalyze another round of initiation, the GDP bound to eIF2 must exchange with GTP by way of a reaction catalyzed by eIF2B. EIF2S1/eIF2-alpha is a key component of the integrated stress response (ISR), required for adaptation to various stress: phosphorylation by metabolic-stress sensing protein kinases (EIF2AK1/HRI, EIF2AK2/PKR, EIF2AK3/PERK and EIF2AK4/GCN2) in response to stress converts EIF2S1/eIF2-alpha in a global protein synthesis inhibitor, leading to a attenuation of cap-dependent translation, while concomitantly initiating the preferential translation of ISR-specific mRNAs, such as the transcriptional activators ATF4 and QRICH1, and hence allowing ATF4- and QRICH1-mediated reprogramming. EIF2S1/eIF2-alpha also acts as an activator of mitophagy in response to mitochondrial damage: phosphorylation by EIF2AK1/HRI promotes relocalization to the mitochondrial surface, thereby triggering PRKN-independent mitophagy. The protein is Eukaryotic translation initiation factor 2 subunit 1 (EIF2S1) of Oryctolagus cuniculus (Rabbit).